We begin with the raw amino-acid sequence, 290 residues long: uncharacterized protein (290 aa).

A run of 5 helical transmembrane segments spans residues 10–27 (FFVA…LLLI), 32–54 (VNYI…YFFS), 69–91 (ILVP…GVLI), 100–117 (VLAG…FFYF), and 121–143 (YLLM…NFEY). Positions 147-183 (VGKERKRILKLKKNYHKLLKEFSNFEREKRMFSNLRK) form a coiled coil.

Its subcellular location is the cell membrane. This is an uncharacterized protein from Aquifex aeolicus (strain VF5).